We begin with the raw amino-acid sequence, 258 residues long: 5'-nucleotidase SurE (258 aa).

Residues D8, D9, S40, and N92 each contribute to the a divalent metal cation site.

Belongs to the SurE nucleotidase family. A divalent metal cation serves as cofactor.

It localises to the cytoplasm. It carries out the reaction a ribonucleoside 5'-phosphate + H2O = a ribonucleoside + phosphate. Its function is as follows. Nucleotidase that shows phosphatase activity on nucleoside 5'-monophosphates. In Brucella anthropi (strain ATCC 49188 / DSM 6882 / CCUG 24695 / JCM 21032 / LMG 3331 / NBRC 15819 / NCTC 12168 / Alc 37) (Ochrobactrum anthropi), this protein is 5'-nucleotidase SurE.